Here is a 193-residue protein sequence, read N- to C-terminus: Thymidine kinase (193 aa).

ATP contacts are provided by residues 9–16 (STMNAGKS) and 87–90 (DEAQ). The active-site Proton acceptor is the Glu-88. The Zn(2+) site is built by Cys-145, Cys-147, Cys-182, and His-185.

It belongs to the thymidine kinase family. As to quaternary structure, homotetramer.

Its subcellular location is the cytoplasm. It catalyses the reaction thymidine + ATP = dTMP + ADP + H(+). In Haemophilus influenzae (strain 86-028NP), this protein is Thymidine kinase.